The chain runs to 148 residues: MEVILLEKVANLGNLGDKVKVRAGYGRNFLVPYGKAVPATKANVEQFEARRAELEKSAAEKLSAAQARAEAINGKEVTIVAKSGDEGKLFGSVGTKDIADAVTALGVEVEKSEVRLPEGALRNTGEYEVDVQMHTDVTATVKVIVVGE.

This sequence belongs to the bacterial ribosomal protein bL9 family.

Its function is as follows. Binds to the 23S rRNA. The protein is Large ribosomal subunit protein bL9 of Hahella chejuensis (strain KCTC 2396).